The chain runs to 430 residues: Enolase (430 aa).

Residue Q163 coordinates (2R)-2-phosphoglycerate. Catalysis depends on E205, which acts as the Proton donor. Mg(2+)-binding residues include D242, E287, and D314. 4 residues coordinate (2R)-2-phosphoglycerate: K339, R368, S369, and K390. The active-site Proton acceptor is K339.

This sequence belongs to the enolase family. The cofactor is Mg(2+).

The protein resides in the cytoplasm. Its subcellular location is the secreted. It is found in the cell surface. The enzyme catalyses (2R)-2-phosphoglycerate = phosphoenolpyruvate + H2O. It functions in the pathway carbohydrate degradation; glycolysis; pyruvate from D-glyceraldehyde 3-phosphate: step 4/5. In terms of biological role, catalyzes the reversible conversion of 2-phosphoglycerate (2-PG) into phosphoenolpyruvate (PEP). It is essential for the degradation of carbohydrates via glycolysis. This is Enolase from Geobacillus sp. (strain WCH70).